A 61-amino-acid chain; its full sequence is Small ribosomal subunit protein uS14 (61 aa).

Zn(2+) is bound by residues C24, C27, C40, and C43.

This sequence belongs to the universal ribosomal protein uS14 family. Zinc-binding uS14 subfamily. Part of the 30S ribosomal subunit. Contacts proteins S3 and S10. It depends on Zn(2+) as a cofactor.

Functionally, binds 16S rRNA, required for the assembly of 30S particles and may also be responsible for determining the conformation of the 16S rRNA at the A site. This Herpetosiphon aurantiacus (strain ATCC 23779 / DSM 785 / 114-95) protein is Small ribosomal subunit protein uS14.